Reading from the N-terminus, the 168-residue chain is MASIAAKSVSLRAATRRAAPVAAPADARFKVWQPVNNKQYETFSYLPPLTNQKIGRQVDYIINNGWTPCLEFADPSTSFVSNANAVRLQGVSAGYYDNRYWTMWKLPMFGCTDPSQVLREVSACQVAFPNVYIRLVAFDNVKQVQCMGFLVQRPRNAAEYCPLEKRSV.

Residues 1 to 28 (MASIAAKSVSLRAATRRAAPVAAPADAR) constitute a chloroplast transit peptide.

It belongs to the RuBisCO small chain family. As to quaternary structure, heterohexadecamer of 8 large and 8 small subunits.

It is found in the plastid. It localises to the chloroplast. In terms of biological role, ruBisCO catalyzes two reactions: the carboxylation of D-ribulose 1,5-bisphosphate, the primary event in carbon dioxide fixation, as well as the oxidative fragmentation of the pentose substrate. Both reactions occur simultaneously and in competition at the same active site. Although the small subunit is not catalytic it is essential for maximal activity. This Chlamydomonas moewusii (Chlamydomonas eugametos) protein is Ribulose bisphosphate carboxylase small subunit, chloroplastic.